The following is a 708-amino-acid chain: Probable inactive lysine-specific demethylase JMJ19 (708 aa).

The tract at residues 35–59 is disordered; sequence VPRDKESPRSVSRQEQTTGFGTDDK. A compositionally biased stretch (polar residues) spans 43–54; sequence RSVSRQEQTTGF. One can recognise a JmjN domain in the interval 108-149; it reads APVFNPTEEEFRDTLSYISSLRDRAEPYGICCVVPPPSWKPP. A JmjC domain is found at 293–454; it reads SSGWNLNSTA…HGDIAVQVNQ (162 aa). Zn(2+) is bound by residues Cys544, Cys547, Cys558, Cys560, Cys567, His570, Cys575, and Cys577. The RING-type; degenerate zinc-finger motif lies at 544 to 581; it reads CCVCLGDLYLSAVNCSCSANRYSCLNHMRKLCACPCDR. A Nuclear localization signal motif is present at residues 646–653; sequence TRKDVAAG. A compositionally biased stretch (basic and acidic residues) spans 678–694; the sequence is AKETLESCSKKSNRPCD. A disordered region spans residues 678–708; it reads AKETLESCSKKSNRPCDNDSSEANAPKKQKQ.

Belongs to the JARID1 histone demethylase family. In terms of tissue distribution, expressed in inflorescences, roots, siliques, leaves and stems.

The protein localises to the nucleus. The chain is Probable inactive lysine-specific demethylase JMJ19 from Arabidopsis thaliana (Mouse-ear cress).